A 619-amino-acid chain; its full sequence is Dihydroxy-acid dehydratase 1 (619 aa).

Aspartate 81 serves as a coordination point for Mg(2+). Cysteine 122 serves as a coordination point for [2Fe-2S] cluster. Positions 123 and 124 each coordinate Mg(2+). Residue lysine 124 is modified to N6-carboxylysine. A [2Fe-2S] cluster-binding site is contributed by cysteine 198. Mg(2+) is bound at residue glutamate 494. The Proton acceptor role is filled by serine 520.

Belongs to the IlvD/Edd family. Homodimer. Requires [2Fe-2S] cluster as cofactor. Mg(2+) serves as cofactor.

It carries out the reaction (2R)-2,3-dihydroxy-3-methylbutanoate = 3-methyl-2-oxobutanoate + H2O. The enzyme catalyses (2R,3R)-2,3-dihydroxy-3-methylpentanoate = (S)-3-methyl-2-oxopentanoate + H2O. It participates in amino-acid biosynthesis; L-isoleucine biosynthesis; L-isoleucine from 2-oxobutanoate: step 3/4. The protein operates within amino-acid biosynthesis; L-valine biosynthesis; L-valine from pyruvate: step 3/4. Functionally, functions in the biosynthesis of branched-chain amino acids. Catalyzes the dehydration of (2R,3R)-2,3-dihydroxy-3-methylpentanoate (2,3-dihydroxy-3-methylvalerate) into 2-oxo-3-methylpentanoate (2-oxo-3-methylvalerate) and of (2R)-2,3-dihydroxy-3-methylbutanoate (2,3-dihydroxyisovalerate) into 2-oxo-3-methylbutanoate (2-oxoisovalerate), the penultimate precursor to L-isoleucine and L-valine, respectively. The polypeptide is Dihydroxy-acid dehydratase 1 (Bordetella pertussis (strain Tohama I / ATCC BAA-589 / NCTC 13251)).